The primary structure comprises 147 residues: UPF0178 protein VIBHAR_03247 (147 aa).

It belongs to the UPF0178 family.

This Vibrio campbellii (strain ATCC BAA-1116) protein is UPF0178 protein VIBHAR_03247.